The chain runs to 132 residues: Holo-[acyl-carrier-protein] synthase (132 aa).

The Mg(2+) site is built by D8 and E64.

The protein belongs to the P-Pant transferase superfamily. AcpS family. Mg(2+) is required as a cofactor.

It localises to the cytoplasm. It catalyses the reaction apo-[ACP] + CoA = holo-[ACP] + adenosine 3',5'-bisphosphate + H(+). Transfers the 4'-phosphopantetheine moiety from coenzyme A to a Ser of acyl-carrier-protein. This is Holo-[acyl-carrier-protein] synthase from Shewanella sediminis (strain HAW-EB3).